The following is a 128-amino-acid chain: uncharacterized protein (128 aa).

The region spanning 5–128 is the VOC domain; the sequence is SIHHIAIICS…DQLPLELYEQ (124 aa). A divalent metal cation-binding residues include H8, E56, H77, and E124.

This is an uncharacterized protein from Bacillus subtilis (strain 168).